Consider the following 324-residue polypeptide: NAD(P)H-dependent D-xylose reductase XYR1 (324 aa).

Tyr-50 (proton donor) is an active-site residue. Position 112 (His-112) interacts with substrate. NAD(+) contacts are provided by residues 168–169 (SN), 217–226 (SSFGPASFKE), and 273–283 (KSSREKTMKSN).

It belongs to the aldo/keto reductase family.

The enzyme catalyses xylitol + NAD(+) = D-xylose + NADH + H(+). It catalyses the reaction xylitol + NADP(+) = D-xylose + NADPH + H(+). It participates in carbohydrate metabolism; D-xylose degradation. Catalyzes the initial reaction in the xylose utilization pathway by reducing D-xylose into xylitol. Xylose is a major component of hemicelluloses such as xylan. Most fungi utilize D-xylose via three enzymatic reactions, xylose reductase (XR), xylitol dehydrogenase (XDH), and xylulokinase, to form xylulose 5-phosphate, which enters pentose phosphate pathway. This Pyricularia oryzae (strain 70-15 / ATCC MYA-4617 / FGSC 8958) (Rice blast fungus) protein is NAD(P)H-dependent D-xylose reductase XYR1 (XYR1).